The following is a 145-amino-acid chain: MQLPTISRTALKDVGSTAGGTVFDVKLTECPQALNGQQVGLFFESGGTVDYTSGNLFAYRADSQGVEQVPQTKADNVQANLDGSAIHLGRNKGAQAAQTFLVSQTAGSSTYGATLRYLACYIRSGAGSIVAGNLRSQVGFSVMYP.

Belongs to the fimbrial protein family.

It localises to the fimbrium. The chain is Protein FimA (fimA) from Bordetella pertussis.